We begin with the raw amino-acid sequence, 3323 residues long: Mucin-3A (3323 aa).

The signal sequence occupies residues 1–15 (MQLLGLLGLLWMLKA). Disordered regions lie at residues 218 to 243 (TISS…TSPT), 270 to 289 (TSMT…SSPT), 325 to 345 (ISRS…STVT), 359 to 380 (GTLS…TETA), 539 to 677 (MSAS…PSTE), 700 to 722 (NASS…GTNS), 734 to 756 (ETSS…KTAK), 909 to 991 (SFSS…TLTP), 1170 to 1201 (ISSA…TTPT), 1318 to 1356 (AESA…FPSS), 1380 to 1442 (AMTS…TNPV), 1484 to 1509 (TMTE…ETAK), 1714 to 1746 (TPSS…TPTS), 1793 to 1844 (FTSS…YPTS), and 1900 to 2056 (TSHS…SHST). A compositionally biased stretch (low complexity) spans 270–284 (TSMTTTASQPTATNT). Over residues 545-563 (GTTHTESISSPPASTSTLH) the composition is skewed to polar residues. Positions 564–618 (TTAESTLAPTTTTSFTTSTTMEPPSTTAATTGTGQTTFTSSTATFPETTTPTPTT) are enriched in low complexity. The segment covering 619–629 (DMSTESLTTAM) has biased composition (polar residues). The span at 630-676 (TSPPITSSVTSTNTVTSMTTTTSPPTTTNSFTSLTSMPLSSTPVPST) shows a compositional bias: low complexity. Over residues 700 to 721 (NASSMTTSETTYPNSPTGPGTN) the composition is skewed to polar residues. Over residues 909–918 (SFSSSMSESS) the composition is skewed to low complexity. Over residues 919–932 (AGTTHTESISSPRG) the composition is skewed to polar residues. The segment covering 933–991 (TTSTLHTTVESTPSPTTTTSFTTSTMMEPPSSTVSTTGRGQTTFPSSTATFPETTTLTP) has biased composition (low complexity). Residues 1324-1356 (PTTTTSFTTSPTMEPPSTTVATTGTGQTTFPSS) show a composition bias toward low complexity. 32 tandem repeats follow at residues 1893 to 1910 (VTTT…FTSS), 1911 to 1927 (IATT…FTSS), 1928 to 1944 (ITTT…FTSS), 1945 to 1961 (ITNT…FTSS), 1962 to 1978 (ITTT…LTSS), 1979 to 1995 (ITTT…YTSL), 1996 to 2012 (ITTT…FTSS), 2013 to 2029 (ITTT…LTSS), 2030 to 2046 (ITTT…FTSS), 2047 to 2062 (ITTE…FTSL), 2063 to 2079 (ITIT…YTTS), 2080 to 2096 (ITTT…FTSS), 2097 to 2113 (ITTT…FTSS), 2114 to 2130 (ITTS…FTSS), 2131 to 2147 (ITTT…FTSS), 2148 to 2164 (ITTT…FTSL), 2165 to 2191 (ITTT…FTSS), 2192 to 2208 (NTIT…YITS), 2209 to 2225 (ITTT…FSSS), 2226 to 2242 (ITTT…FTSS), 2243 to 2259 (ITTT…FTSS), 2260 to 2276 (ITTT…FTSS), 2277 to 2293 (ITTS…STSL), 2294 to 2310 (ITTT…FTSS), 2311 to 2327 (ITTT…FTSS), 2328 to 2344 (ITTT…FTSS), 2345 to 2361 (ITTT…FTSS), 2362 to 2378 (ITTT…FSSS), 2379 to 2395 (ITTT…LTSW), 2396 to 2412 (VTTT…LTSS), 2413 to 2429 (ITTT…FTSS), and 2430 to 2446 (ITTT…LSSS). The interval 1893–2446 (VTTTTKITSH…SESTPSLSSS (554 aa)) is 32 X approximate tandem repeats, Ser/Thr-rich. Residues 1907–1947 (FTSSIATTETPSHSTPRFTSSITTTETPSHSTPRFTSSITN) show a composition bias toward polar residues. The span at 1948–2056 (TKTTSHSSPS…ITTETTSHST (109 aa)) shows a compositional bias: low complexity. 4 stretches are compositionally biased toward low complexity: residues 2100-2170 (TETT…TTET), 2177-2384 (TTET…TTET), 2393-2447 (TSWV…SSST), and 2464-2507 (TTSE…TTTT). Disordered stretches follow at residues 2100–2447 (TETT…SSST), 2464–2508 (TTSE…TTTD), 2578–2608 (TQTP…DSST), 2631–2656 (IPST…TSTS), 2834–2858 (MMPE…VPTN), and 2897–2937 (SSLP…TSRR). The segment covering 2578–2602 (TQTPPVLTSATGTQTSPAPTTVTFG) has biased composition (polar residues). 3 stretches are compositionally biased toward low complexity: residues 2633-2656 (STHS…TSTS), 2834-2849 (MMPE…ASSS), and 2905-2937 (TSSK…TSRR). Positions 2976–3009 (SGDRCQLQTRCQNGGQWDGLKCQCPSTFYGSSCE) constitute an EGF-like domain. Cystine bridges form between cysteine 2980/cysteine 2986 and cysteine 2999/cysteine 3008. Residues 3018–3143 (DVVETEVGME…DSIKVNNNSK (126 aa)) form the SEA domain. A helical membrane pass occupies residues 3227-3247 (LVGGLTAGAALLVLLLLALGV).

In terms of processing, highly O-glycosylated and probably also N-glycosylated. As to expression, broad specificity; small intestine, colon, colonic tumors, heart, liver, thymus, prostate, pancreas and gall bladder.

Its subcellular location is the membrane. The protein localises to the secreted. Functionally, major glycoprotein component of a variety of mucus gels. Thought to provide a protective, lubricating barrier against particles and infectious agents at mucosal surfaces. May be involved in ligand binding and intracellular signaling. The chain is Mucin-3A from Homo sapiens (Human).